Consider the following 534-residue polypeptide: tRNA uridine(34) acetyltransferase (534 aa).

The tract at residues 70–330 is radical S-adenosyl-L-methionine (rSAM); sequence KPVRTISGVA…GEFKPYREEE (261 aa). Residues 73–344 form the Radical SAM core domain; the sequence is RTISGVAVVA…ISYAKSIMPK (272 aa). Positions 90, 95, and 98 each coordinate [4Fe-4S] cluster. Acetyl-CoA is bound at residue Lys150. A disulfide bridge connects residues Cys384 and Cys389. The 148-residue stretch at 387 to 534 folds into the N-acetyltransferase domain; it reads IRCREVGHVY…RVGAYMGKEL (148 aa). Acetyl-CoA contacts are provided by residues 461-464, 485-487, and Tyr518; these read QLHV and YGR.

Belongs to the ELP3 family. [4Fe-4S] cluster serves as cofactor.

It carries out the reaction uridine(34) in tRNA + acetyl-CoA + S-adenosyl-L-methionine + H2O = 5-(carboxymethyl)uridine(34) in tRNA + 5'-deoxyadenosine + L-methionine + CoA + 2 H(+). The protein operates within tRNA modification. Functionally, tRNA uridine(34) acetyltransferase, which mediates formation of carboxymethyluridine in the wobble base at position 34 in tRNAs. The proposed mechanism is the following: (i) recruits S-adenosyl-L-methionine and cleaves it to generate a 5'-deoxyadenosine radical (5'-dA) in the radical S-adenosyl-L-methionine (rSAM) region, (ii) hydrolyzes acetyl-CoA in the N-acetyltransferase domain and (iii) an acetyl radical is formed by the products of the two domains and (iv) is transferred onto the C5 position of uridine(34) in the bound tRNA molecule. Does not show protein lysine acetyltransferase activity. In Methanocaldococcus infernus (strain DSM 11812 / JCM 15783 / ME), this protein is tRNA uridine(34) acetyltransferase.